The sequence spans 305 residues: tRNA pseudouridine synthase B (305 aa).

Catalysis depends on aspartate 39, which acts as the Nucleophile.

It belongs to the pseudouridine synthase TruB family. Type 1 subfamily.

It carries out the reaction uridine(55) in tRNA = pseudouridine(55) in tRNA. Its function is as follows. Responsible for synthesis of pseudouridine from uracil-55 in the psi GC loop of transfer RNAs. The chain is tRNA pseudouridine synthase B from Staphylococcus aureus (strain MRSA252).